A 204-amino-acid polypeptide reads, in one-letter code: Vacuolar protein-sorting-associated protein 46 (204 aa).

Positions 1 to 103 (MSRNSAAGLE…ASMGQVCKGM (103 aa)) are interaction with VSP24. At Ser-5 the chain carries Phosphoserine. Coiled-coil stretches lie at residues 9 to 56 (LENT…RIYA) and 109 to 129 (NMNLQQITMIMDKFEQQFEDL). Positions 104-204 (DKALQNMNLQ…LAQRLRALRG (101 aa)) are interaction with VSP4. Residues 176-204 (NVPEIKAKEVNVDDEKEDKLAQRLRALRG) are interaction with VTA1. Positions 185–196 (VNVDDEKEDKLA) are enriched in basic and acidic residues. Positions 185-204 (VNVDDEKEDKLAQRLRALRG) are disordered.

The protein belongs to the SNF7 family. Self-associates. Interacts with VPS4 and VTA1. Interacts with IST1.

The protein resides in the endosome membrane. It localises to the endomembrane system. Its function is as follows. Class E VPS protein implicated in concentration and sorting of cargo proteins of the multivesicular body (MVB) for incorporation into intralumenal vesicles. The lumenal sequestrated membrane proteins will be targeted into the vacuole after fusion of the endosome with the vacuole. Probably acts as a peripherally associated component of the ESCRT-III complex, which appears to be critical for late steps in MVB sorting, such as membrane invagination and final cargo sorting and recruits late-acting components of the sorting machinery. The MVB pathway requires the sequential function of ESCRT-O, -I,-II and -III complex assemblies. Regulates the membrane association of VPS4. Can stimulate VPS4 ATPase activity directly or via VTA1. The protein is Vacuolar protein-sorting-associated protein 46 (DID2) of Saccharomyces cerevisiae (strain ATCC 204508 / S288c) (Baker's yeast).